The following is an 831-amino-acid chain: Heat shock 70 kDa protein 14 (831 aa).

Disordered regions lie at residues 503 to 579 and 786 to 831; these read EEVE…KKKV and TKPK…EGST. Positions 509–526 are enriched in basic and acidic residues; it reads VTKEHSEETTKMDSDKAS. Phosphoserine is present on S533.

It belongs to the heat shock protein 70 (TC 1.A.33) family. HSP110/SSE subfamily. In terms of assembly, interacts with HTT1 in both cytoplasm and nucleus. Constitutively expressed.

It localises to the cytoplasm. Its subcellular location is the nucleus. In cooperation with other chaperones, Hsp70s are key components that facilitate folding of de novo synthesized proteins, assist translocation of precursor proteins into organelles, and are responsible for degradation of damaged protein under stress conditions. The sequence is that of Heat shock 70 kDa protein 14 (HSP70-14) from Arabidopsis thaliana (Mouse-ear cress).